We begin with the raw amino-acid sequence, 212 residues long: Ribonuclease HII (212 aa).

In terms of domain architecture, RNase H type-2 spans 17–211 (ANLAGIDEAG…VIEALLSLEQ (195 aa)). A divalent metal cation-binding residues include Asp23, Glu24, and Asp120.

This sequence belongs to the RNase HII family. It depends on Mn(2+) as a cofactor. The cofactor is Mg(2+).

Its subcellular location is the cytoplasm. It carries out the reaction Endonucleolytic cleavage to 5'-phosphomonoester.. Endonuclease that specifically degrades the RNA of RNA-DNA hybrids. The protein is Ribonuclease HII of Chloroflexus aurantiacus (strain ATCC 29364 / DSM 637 / Y-400-fl).